A 533-amino-acid polypeptide reads, in one-letter code: Retinoid isomerohydrolase (533 aa).

At Ser-2 the chain carries N-acetylserine. Thr-101 and Thr-105 each carry phosphothreonine. Cys-112 carries S-palmitoyl cysteine; in membrane form lipidation. Lys-113 bears the N6-acetyllysine mark. Ser-117 carries the post-translational modification Phosphoserine. His-180 provides a ligand contact to Fe cation. Residue Cys-231 is the site of S-palmitoyl cysteine; in membrane form attachment. Residues His-241 and His-313 each coordinate Fe cation. S-palmitoyl cysteine; in membrane form attachment occurs at residues Cys-329 and Cys-330. His-527 serves as a coordination point for Fe cation.

Belongs to the carotenoid oxygenase family. As to quaternary structure, interacts with MYO7A; this mediates light-dependent intracellular transport of RPE65. Fe(2+) is required as a cofactor. In terms of processing, palmitoylation by LRAT regulates ligand binding specificity; the palmitoylated form (membrane form) specifically binds all-trans-retinyl-palmitate, while the soluble unpalmitoylated form binds all-trans-retinol (vitamin A). Retinal pigment epithelium specific.

The protein resides in the cytoplasm. It is found in the cell membrane. Its subcellular location is the microsome membrane. It catalyses the reaction an all-trans-retinyl ester + H2O = 11-cis-retinol + a fatty acid + H(+). The catalysed reaction is lutein = (3R,3'S)-zeaxanthin. It carries out the reaction all-trans-retinyl hexadecanoate + H2O = 11-cis-retinol + hexadecanoate + H(+). In terms of biological role, critical isomerohydrolase in the retinoid cycle involved in regeneration of 11-cis-retinal, the chromophore of rod and cone opsins. Catalyzes the cleavage and isomerization of all-trans-retinyl fatty acid esters to 11-cis-retinol which is further oxidized by 11-cis retinol dehydrogenase to 11-cis-retinal for use as visual chromophore. Essential for the production of 11-cis retinal for both rod and cone photoreceptors. Also capable of catalyzing the isomerization of lutein to meso-zeaxanthin an eye-specific carotenoid. The soluble form binds vitamin A (all-trans-retinol), making it available for LRAT processing to all-trans-retinyl ester. The membrane form, palmitoylated by LRAT, binds all-trans-retinyl esters, making them available for IMH (isomerohydrolase) processing to all-cis-retinol. The soluble form is regenerated by transferring its palmitoyl groups onto 11-cis-retinol, a reaction catalyzed by LRAT. The protein is Retinoid isomerohydrolase (RPE65) of Chlorocebus aethiops (Green monkey).